Here is a 243-residue protein sequence, read N- to C-terminus: Transcription factor A, mitochondrial (243 aa).

Residues 1–42 (MALFRGMWSVLKALGRTGVEMCAGCGGRIPSSISLVCIPKCF) constitute a mitochondrion transit peptide. A DNA-binding region (HMG box 1) is located at residues 49-117 (PKKPMSSYLR…AYKEAVSKYK (69 aa)). 3 positions are modified to phosphoserine; by PKA: Ser54, Ser55, and Ser60. Lys66 carries the post-translational modification N6-succinyllysine. Phosphothreonine is present on Thr121. A DNA-binding region (HMG box 2) is located at residues 154–218 (PKRPRSAYNI…RYDNEMKSWE (65 aa)). Position 159 is a phosphoserine; by PKA (Ser159). Ser192 carries the phosphoserine modification.

Monomer; binds DNA as a monomer. Homodimer. Component of the mitochondrial transcription initiation complex, composed at least of TFB2M, TFAM and POLRMT. In this complex TFAM recruits POLRMT to the promoter whereas TFB2M induces structural changes in POLRMT to enable promoter opening and trapping of the DNA non-template strand. Upon metabolic stress, forms a complex composed of FOXO3, SIRT3, TFAM and POLRMT. Interacts with TFB1M and TFB2M. Interacts with CLPX; this enhances DNA-binding. Phosphorylation by PKA within the HMG box 1 impairs DNA binding and promotes degradation by the AAA+ Lon protease. As to expression, the mitochondrial isoform is widely expressed while the nuclear isoform is testis-specific.

The protein resides in the mitochondrion. It is found in the mitochondrion matrix. The protein localises to the mitochondrion nucleoid. Its subcellular location is the nucleus. In terms of biological role, binds to the mitochondrial light strand promoter and functions in mitochondrial transcription regulation. Component of the mitochondrial transcription initiation complex, composed at least of TFB2M, TFAM and POLRMT that is required for basal transcription of mitochondrial DNA. In this complex, TFAM recruits POLRMT to a specific promoter whereas TFB2M induces structural changes in POLRMT to enable promoter opening and trapping of the DNA non-template strand. Required for accurate and efficient promoter recognition by the mitochondrial RNA polymerase. Promotes transcription initiation from the HSP1 and the light strand promoter by binding immediately upstream of transcriptional start sites. Is able to unwind DNA. Bends the mitochondrial light strand promoter DNA into a U-turn shape via its HMG boxes. Required for maintenance of normal levels of mitochondrial DNA. May play a role in organizing and compacting mitochondrial DNA. Its function is as follows. May also function as a transcriptional activator or may have a structural role in the compaction of nuclear DNA during spermatogenesis. The chain is Transcription factor A, mitochondrial from Mus musculus (Mouse).